We begin with the raw amino-acid sequence, 101 residues long: NAD(P)H-quinone oxidoreductase subunit 4L, chloroplastic (101 aa).

2 helical membrane passes run 2–22 and 61–81; these read MFEH…YGLI and IFSI…LAIV.

This sequence belongs to the complex I subunit 4L family. NDH is composed of at least 16 different subunits, 5 of which are encoded in the nucleus.

The protein resides in the plastid. It is found in the chloroplast thylakoid membrane. It carries out the reaction a plastoquinone + NADH + (n+1) H(+)(in) = a plastoquinol + NAD(+) + n H(+)(out). The catalysed reaction is a plastoquinone + NADPH + (n+1) H(+)(in) = a plastoquinol + NADP(+) + n H(+)(out). NDH shuttles electrons from NAD(P)H:plastoquinone, via FMN and iron-sulfur (Fe-S) centers, to quinones in the photosynthetic chain and possibly in a chloroplast respiratory chain. The immediate electron acceptor for the enzyme in this species is believed to be plastoquinone. Couples the redox reaction to proton translocation, and thus conserves the redox energy in a proton gradient. The polypeptide is NAD(P)H-quinone oxidoreductase subunit 4L, chloroplastic (Dioscorea elephantipes (Elephant's foot yam)).